We begin with the raw amino-acid sequence, 337 residues long: Cysteinyl leukotriene receptor 1 (337 aa).

Residues 1–28 (MDETGNLTVSSATCHDTIDDFRNQVYST) are Extracellular-facing. A glycan (N-linked (GlcNAc...) asparagine) is linked at asparagine 6. A helical membrane pass occupies residues 29–49 (LYSMISVVGFFGNGFVLYVLI). The Cytoplasmic segment spans residues 50–57 (KTYHKKSA). The chain crosses the membrane as a helical span at residues 58 to 78 (FQVYMINLAVADLLCVCTLPL). Residues 79 to 106 (RVVYYVHKGIWLFGDFLCRLSTYALYVN) lie on the Extracellular side of the membrane. An intrachain disulfide couples cysteine 96 to cysteine 173. The chain crosses the membrane as a helical span at residues 107–127 (LYCSIFFMTAMSFFRCIAIVF). Residues 128 to 141 (PVQNINLVTQKKAR) lie on the Cytoplasmic side of the membrane. Residues 142-162 (FVCVGIWIFVILTSSPFLMAK) form a helical membrane-spanning segment. The Extracellular segment spans residues 163–193 (PQKDEKNNTKCFEPPQDNQTKNHVLVLHYVS). 2 N-linked (GlcNAc...) asparagine glycosylation sites follow: asparagine 169 and asparagine 180. Residues 194-214 (LFVGFIIPFVIIIVCYTMIIL) traverse the membrane as a helical segment. Residues 215-230 (TLLKKSMKKNLSSHKK) are Cytoplasmic-facing. Residues 231–251 (AIGMIMVVTAAFLVSFMPYHI) traverse the membrane as a helical segment. The Extracellular portion of the chain corresponds to 252–276 (QRTIHLHFLHNETKPCDSVLRMQKS). N-linked (GlcNAc...) asparagine glycosylation occurs at asparagine 262. The chain crosses the membrane as a helical span at residues 277-297 (VVITLSLAASNCCFDPLLYFF). At 298–337 (SGGNFRKRLSTFRKHSLSSVTYVPRKKASLPEKGEEICKV) the chain is on the cytoplasmic side.

This sequence belongs to the G-protein coupled receptor 1 family. In terms of tissue distribution, widely expressed, with highest levels in spleen and peripheral blood leukocytes. Lower expression in several tissues, such as lung (mostly in smooth muscle bundles and alveolar macrophages), placenta, small intestine, pancreas, colon and heart.

It is found in the cell membrane. In terms of biological role, receptor for cysteinyl leukotrienes mediating bronchoconstriction of individuals with and without asthma. Stimulation by LTD4 results in the contraction and proliferation of smooth muscle, edema, eosinophil migration and damage to the mucus layer in the lung. This response is mediated via a G-protein that activates a phosphatidylinositol-calcium second messenger system. The rank order of affinities for the leukotrienes is LTD4 &gt;&gt; LTE4 = LTC4 &gt;&gt; LTB4. This Homo sapiens (Human) protein is Cysteinyl leukotriene receptor 1 (CYSLTR1).